The following is a 717-amino-acid chain: Ferric reduction oxidase 3, mitochondrial (717 aa).

The transit peptide at 1 to 23 directs the protein to the mitochondrion; that stretch reads MAARGRLVVARGNRSFSSIIRKY. Helical transmembrane passes span 40-59, 86-104, 140-163, 232-255, 306-330, and 353-373; these read LLTMVILMGTVVIWIMMPTS, LLVYMFPMILLASLGSIYL, LGIVTVTEVMFLMMFMALLLWSLA, YHIWLGNLVMTLFTSHGLCYCIYW, THYLYMVFMLFFVFHVGISYALISF, and LVSARVLPCETVELNFSKNPM. In terms of domain architecture, Ferric oxidoreductase spans 198-317; the sequence is GLTGNICLGF…YLYMVFMLFF (120 aa). Heme is bound by residues histidine 233, histidine 247, histidine 307, and histidine 320. One can recognise an FAD-binding FR-type domain in the interval 346–451; it reads QSRNNVKLVS…EGPYGPASTD (106 aa). An FAD-binding site is contributed by 395–398; the sequence is HPFT. Residue 443–446 participates in NAD(+) binding; that stretch reads GPYG. 2 consecutive transmembrane segments (helical) span residues 564 to 586 and 606 to 627; these read WLWLATILSSSFMIFIIIIAIIS and SLIYLLAISISVVATSTVAMLC.

This sequence belongs to the ferric reductase (FRE) family. Requires FAD as cofactor. Expressed in root steele. Detected in shoots, leaves, stems, siliques, flowers and cotyledons.

Its subcellular location is the mitochondrion membrane. The enzyme catalyses 2 a Fe(II)-siderophore + NAD(+) + H(+) = 2 a Fe(III)-siderophore + NADH. In terms of biological role, ferric chelate reductase involved in iron reduction in roots. May participate in the transport of electrons to a Fe(3+) ion via FAD and heme intermediates. The protein is Ferric reduction oxidase 3, mitochondrial (FRO3) of Arabidopsis thaliana (Mouse-ear cress).